Reading from the N-terminus, the 604-residue chain is NADH-ubiquinone oxidoreductase chain 5 (604 aa).

The next 16 membrane-spanning stretches (helical) occupy residues 2–22 (FSSL…LSIF), 41–61 (AFIT…ETII), 85–105 (MIFV…SLWY), 115–135 (FFKY…ANNL), 138–158 (LFIG…WWYG), 169–189 (AILY…WFLF), 209–231 (LPLL…HPWL), 239–259 (TPVS…FLLI), 271–291 (IQSL…ICAL), 299–318 (IIAF…IGIN), 323–345 (AFLH…GSII), 364–384 (MPFT…IPFL), 411–431 (LIAT…ALLG), 455–475 (LLIG…PTTV), 486–506 (LTAL…SLMT), and 582–602 (IKLY…LFNL).

This sequence belongs to the complex I subunit 5 family. In terms of assembly, core subunit of respiratory chain NADH dehydrogenase (Complex I) which is composed of 45 different subunits.

It localises to the mitochondrion inner membrane. It carries out the reaction a ubiquinone + NADH + 5 H(+)(in) = a ubiquinol + NAD(+) + 4 H(+)(out). Functionally, core subunit of the mitochondrial membrane respiratory chain NADH dehydrogenase (Complex I) which catalyzes electron transfer from NADH through the respiratory chain, using ubiquinone as an electron acceptor. Essential for the catalytic activity and assembly of complex I. This chain is NADH-ubiquinone oxidoreductase chain 5 (MT-ND5), found in Equus caballus (Horse).